Consider the following 427-residue polypeptide: MLDPKLLRNSLDEVAARLKTKRYDLDVDAFSQLEERRKSVQVRTEELQSERNSKSKNIGMMIKQGQDPQPLKDEVAKIGEQLETAKAELQDIQDKLDDLLQGIPNLPDASVPEGASEDDNVEVRQWGSVREFDFEPKDHVDLGESLGLLDFNSGAKLAGSRFVVMRRELARLHRALAQFMLDIHTTEHGYQETMTPFLVHAHALQGTGQLPKFEADLFKVPGEHDFYLIPTAEVPVTNLVREEILDAKELPLKMTSHTPCFRSEAGSYGRDVRGMIRQHQFEKVELIHVVAPEQSDAALEELTGNAERILQLLNLPYRVVALCGGDLGFSAAKTYDIEVWLPAQKKYREISSCSNCRDFQARRMQARWRNPETGKPELVHTLNGSGLAIGRTLIAVLENYQQADGSILVPDVLEPYMGGVKVIKSAN.

Residue 231 to 233 (TAE) coordinates L-serine. 262–264 (RSE) is an ATP binding site. E285 serves as a coordination point for L-serine. 349-352 (EISS) provides a ligand contact to ATP. S385 is an L-serine binding site.

It belongs to the class-II aminoacyl-tRNA synthetase family. Type-1 seryl-tRNA synthetase subfamily. In terms of assembly, homodimer. The tRNA molecule binds across the dimer.

The protein localises to the cytoplasm. The enzyme catalyses tRNA(Ser) + L-serine + ATP = L-seryl-tRNA(Ser) + AMP + diphosphate + H(+). It carries out the reaction tRNA(Sec) + L-serine + ATP = L-seryl-tRNA(Sec) + AMP + diphosphate + H(+). The protein operates within aminoacyl-tRNA biosynthesis; selenocysteinyl-tRNA(Sec) biosynthesis; L-seryl-tRNA(Sec) from L-serine and tRNA(Sec): step 1/1. In terms of biological role, catalyzes the attachment of serine to tRNA(Ser). Is also able to aminoacylate tRNA(Sec) with serine, to form the misacylated tRNA L-seryl-tRNA(Sec), which will be further converted into selenocysteinyl-tRNA(Sec). This is Serine--tRNA ligase from Hahella chejuensis (strain KCTC 2396).